The primary structure comprises 47 residues: Photosystem II reaction center protein Psb30 (47 aa).

A helical membrane pass occupies residues 19 to 39 (VIFQLLSVALIVIAGPVVIFL).

Belongs to the Psb30/Ycf12 family. PSII is composed of 1 copy each of membrane proteins PsbA, PsbB, PsbC, PsbD, PsbE, PsbF, PsbH, PsbI, PsbJ, PsbK, PsbL, PsbM, PsbT, PsbX, PsbY, PsbZ, Psb30/Ycf12, peripheral proteins PsbO, CyanoQ (PsbQ), PsbU, PsbV and a large number of cofactors. It forms dimeric complexes.

The protein resides in the cellular thylakoid membrane. A core subunit of photosystem II (PSII), probably helps stabilize the reaction center. The polypeptide is Photosystem II reaction center protein Psb30 (Nostoc punctiforme (strain ATCC 29133 / PCC 73102)).